The primary structure comprises 118 residues: Large ribosomal subunit protein bL17 (118 aa).

It belongs to the bacterial ribosomal protein bL17 family. Part of the 50S ribosomal subunit. Contacts protein L32.

In Hydrogenobaculum sp. (strain Y04AAS1), this protein is Large ribosomal subunit protein bL17.